The following is a 288-amino-acid chain: uncharacterized protein (288 aa).

It to M.bovis Mb1522c, M.leprae ML1804 and M.avium MAV321.

This is an uncharacterized protein from Mycobacterium tuberculosis (strain CDC 1551 / Oshkosh).